An 873-amino-acid polypeptide reads, in one-letter code: Alanine--tRNA ligase (873 aa).

Residues His-562, His-566, Cys-663, and His-667 each coordinate Zn(2+).

It belongs to the class-II aminoacyl-tRNA synthetase family. It depends on Zn(2+) as a cofactor.

It localises to the cytoplasm. It catalyses the reaction tRNA(Ala) + L-alanine + ATP = L-alanyl-tRNA(Ala) + AMP + diphosphate. Catalyzes the attachment of alanine to tRNA(Ala) in a two-step reaction: alanine is first activated by ATP to form Ala-AMP and then transferred to the acceptor end of tRNA(Ala). Also edits incorrectly charged Ser-tRNA(Ala) and Gly-tRNA(Ala) via its editing domain. The protein is Alanine--tRNA ligase of Bordetella petrii (strain ATCC BAA-461 / DSM 12804 / CCUG 43448).